The sequence spans 237 residues: D-aminoacyl-tRNA deacylase (237 aa).

It belongs to the DtdA deacylase family. In terms of assembly, monomer. Zn(2+) is required as a cofactor.

It carries out the reaction a D-aminoacyl-tRNA + H2O = a tRNA + a D-alpha-amino acid + H(+). The catalysed reaction is glycyl-tRNA(Ala) + H2O = tRNA(Ala) + glycine + H(+). In terms of biological role, D-aminoacyl-tRNA deacylase with broad substrate specificity. By recycling D-aminoacyl-tRNA to D-amino acids and free tRNA molecules, this enzyme counteracts the toxicity associated with the formation of D-aminoacyl-tRNA entities in vivo. The sequence is that of D-aminoacyl-tRNA deacylase from Sulfurisphaera tokodaii (strain DSM 16993 / JCM 10545 / NBRC 100140 / 7) (Sulfolobus tokodaii).